The chain runs to 114 residues: Vacuolar morphogenesis protein 10 (114 aa).

Its subcellular location is the vacuole membrane. Its function is as follows. Required for vacuolar fusion. Involved in the early steps of the fusion pathway. The chain is Vacuolar morphogenesis protein 10 (VAM10) from Saccharomyces cerevisiae (strain ATCC 204508 / S288c) (Baker's yeast).